A 386-amino-acid polypeptide reads, in one-letter code: ATP synthase subunit a (386 aa).

The next 4 membrane-spanning stretches (helical) occupy residues 150-170 (FTNEVLYMLLTVVLVVFLFFV), 243-263 (HFLITLALSFSIFIGITIVGF), 270-290 (FFSFLLPAGVPLPLAPFLVLL), and 310-330 (MMAGHSLVKILSGFAWTMLFL).

Belongs to the ATPase A chain family. As to quaternary structure, F-type ATPases have 2 components, CF(1) - the catalytic core - and CF(0) - the membrane proton channel. CF(1) has five subunits: alpha(3), beta(3), gamma(1), delta(1), epsilon(1). CF(0) has three main subunits: a, b and c.

The protein localises to the mitochondrion inner membrane. Functionally, mitochondrial membrane ATP synthase (F(1)F(0) ATP synthase or Complex V) produces ATP from ADP in the presence of a proton gradient across the membrane which is generated by electron transport complexes of the respiratory chain. F-type ATPases consist of two structural domains, F(1) - containing the extramembraneous catalytic core and F(0) - containing the membrane proton channel, linked together by a central stalk and a peripheral stalk. During catalysis, ATP synthesis in the catalytic domain of F(1) is coupled via a rotary mechanism of the central stalk subunits to proton translocation. Key component of the proton channel; it may play a direct role in the translocation of protons across the membrane. This is ATP synthase subunit a (ATP6) from Triticum aestivum (Wheat).